Reading from the N-terminus, the 471-residue chain is Alpha-galactosidase 6 (471 aa).

The signal sequence occupies residues 1-18 (MFAFYFLTACISLKGVFG). Cys42 and Cys74 are oxidised to a cystine. Residues Asp72 and Asp73 each coordinate substrate. Residue Asn105 is glycosylated (N-linked (GlcNAc...) asparagine). The cysteines at positions 121 and 151 are disulfide-linked. Residue Lys147 participates in substrate binding. The Nucleophile role is filled by Asp149. The N-linked (GlcNAc...) asparagine glycan is linked to Asn175. A substrate-binding site is contributed by Arg205. Catalysis depends on Asp209, which acts as the Proton donor. 2 disulfides stabilise this stretch: Cys221–Cys237 and Cys223–Cys230. Gln251 contributes to the substrate binding site. N-linked (GlcNAc...) asparagine glycosylation is found at Asn270, Asn370, Asn403, Asn422, Asn435, and Asn454.

The protein belongs to the glycosyl hydrolase 27 family. Homotetramer.

It is found in the secreted. It catalyses the reaction Hydrolysis of terminal, non-reducing alpha-D-galactose residues in alpha-D-galactosides, including galactose oligosaccharides, galactomannans and galactolipids.. This Saccharomyces cerevisiae (Baker's yeast) protein is Alpha-galactosidase 6 (MEL6).